A 347-amino-acid chain; its full sequence is NADH-ubiquinone oxidoreductase chain 2 (347 aa).

Helical transmembrane passes span Pro3 to Ser23, His25 to Met45, Tyr59 to Met79, Phe111 to Leu131, Ile149 to Gly169, Ile178 to Pro198, Thr201 to Leu221, Ser242 to Pro262, Asn274 to Leu294, and Leu325 to Ile345.

This sequence belongs to the complex I subunit 2 family. Core subunit of respiratory chain NADH dehydrogenase (Complex I) which is composed of 45 different subunits. Interacts with TMEM242.

The protein localises to the mitochondrion inner membrane. The enzyme catalyses a ubiquinone + NADH + 5 H(+)(in) = a ubiquinol + NAD(+) + 4 H(+)(out). In terms of biological role, core subunit of the mitochondrial membrane respiratory chain NADH dehydrogenase (Complex I) which catalyzes electron transfer from NADH through the respiratory chain, using ubiquinone as an electron acceptor. Essential for the catalytic activity and assembly of complex I. This Rhinoceros unicornis (Greater Indian rhinoceros) protein is NADH-ubiquinone oxidoreductase chain 2.